Here is a 289-residue protein sequence, read N- to C-terminus: Ribosomal RNA small subunit methyltransferase H (289 aa).

S-adenosyl-L-methionine-binding positions include 40 to 42, Asp-60, Phe-84, Asp-106, and Gln-113; that span reads GGH.

The protein belongs to the methyltransferase superfamily. RsmH family.

Its subcellular location is the cytoplasm. The enzyme catalyses cytidine(1402) in 16S rRNA + S-adenosyl-L-methionine = N(4)-methylcytidine(1402) in 16S rRNA + S-adenosyl-L-homocysteine + H(+). In terms of biological role, specifically methylates the N4 position of cytidine in position 1402 (C1402) of 16S rRNA. In Haemophilus influenzae (strain PittGG), this protein is Ribosomal RNA small subunit methyltransferase H.